Reading from the N-terminus, the 181-residue chain is Large ribosomal subunit protein uL10 (181 aa).

It belongs to the universal ribosomal protein uL10 family. As to quaternary structure, part of the ribosomal stalk of the 50S ribosomal subunit. The N-terminus interacts with L11 and the large rRNA to form the base of the stalk. The C-terminus forms an elongated spine to which L12 dimers bind in a sequential fashion forming a multimeric L10(L12)X complex.

Forms part of the ribosomal stalk, playing a central role in the interaction of the ribosome with GTP-bound translation factors. In Chloroflexus aggregans (strain MD-66 / DSM 9485), this protein is Large ribosomal subunit protein uL10.